We begin with the raw amino-acid sequence, 388 residues long: Chorismate synthase (388 aa).

The NADP(+) site is built by Arg39 and Arg45. FMN is bound by residues 130–132 (RSS), 251–252 (NA), Gly296, 311–315 (KPIPT), and Arg337.

The protein belongs to the chorismate synthase family. Homotetramer. It depends on FMNH2 as a cofactor.

It carries out the reaction 5-O-(1-carboxyvinyl)-3-phosphoshikimate = chorismate + phosphate. Its pathway is metabolic intermediate biosynthesis; chorismate biosynthesis; chorismate from D-erythrose 4-phosphate and phosphoenolpyruvate: step 7/7. Its function is as follows. Catalyzes the anti-1,4-elimination of the C-3 phosphate and the C-6 proR hydrogen from 5-enolpyruvylshikimate-3-phosphate (EPSP) to yield chorismate, which is the branch point compound that serves as the starting substrate for the three terminal pathways of aromatic amino acid biosynthesis. This reaction introduces a second double bond into the aromatic ring system. This chain is Chorismate synthase, found in Streptococcus sanguinis (strain SK36).